Here is a 386-residue protein sequence, read N- to C-terminus: Succinate--CoA ligase [ADP-forming] subunit beta (386 aa).

Positions 9 to 244 (KELLRSYGVP…ETEEDPREVE (236 aa)) constitute an ATP-grasp domain. ATP contacts are provided by residues lysine 46, 53–55 (GRG), glutamate 99, cysteine 102, and glutamate 107. Residues asparagine 199 and aspartate 213 each coordinate Mg(2+). Substrate contacts are provided by residues asparagine 264 and 321-323 (GIM).

The protein belongs to the succinate/malate CoA ligase beta subunit family. Heterotetramer of two alpha and two beta subunits. Mg(2+) serves as cofactor.

It carries out the reaction succinate + ATP + CoA = succinyl-CoA + ADP + phosphate. The enzyme catalyses GTP + succinate + CoA = succinyl-CoA + GDP + phosphate. It functions in the pathway carbohydrate metabolism; tricarboxylic acid cycle; succinate from succinyl-CoA (ligase route): step 1/1. Functionally, succinyl-CoA synthetase functions in the citric acid cycle (TCA), coupling the hydrolysis of succinyl-CoA to the synthesis of either ATP or GTP and thus represents the only step of substrate-level phosphorylation in the TCA. The beta subunit provides nucleotide specificity of the enzyme and binds the substrate succinate, while the binding sites for coenzyme A and phosphate are found in the alpha subunit. In Exiguobacterium sibiricum (strain DSM 17290 / CCUG 55495 / CIP 109462 / JCM 13490 / 255-15), this protein is Succinate--CoA ligase [ADP-forming] subunit beta.